The sequence spans 204 residues: Ribonuclease HII (204 aa).

Positions 1 to 197 (MILGIDEAGR…KNRILNPKLL (197 aa)) constitute an RNase H type-2 domain. 3 residues coordinate a divalent metal cation: Asp-6, Glu-7, and Asp-103.

It belongs to the RNase HII family. Mn(2+) is required as a cofactor. Requires Mg(2+) as cofactor.

The protein resides in the cytoplasm. The enzyme catalyses Endonucleolytic cleavage to 5'-phosphomonoester.. In terms of biological role, endonuclease that specifically degrades the RNA of RNA-DNA hybrids. The protein is Ribonuclease HII of Helicobacter pylori (strain Shi470).